We begin with the raw amino-acid sequence, 347 residues long: MAATPDREKALEAALAQIDKQFGKGSIMRLGDDTRAPIEVIPTGSIALDVALGIGGLPRGRVVEIYGPESSGKTTVALHAVANAQRAGGIAAFIDAEHALDPDYAAKLGVDTDALLVSQPDTGEQALEIMDMLVGSGSLDIVVIDSVAALVPRAEIEGEMGDSHVGLQARLMSQALRKITGRLSQTKTTAIFINQLREKIGVFFGSPETTTGGKALKFYASVRIDVRRIQTLKEGADSVGNRTKAKIVKNKMAPPFKIAEFDIIYGQGISREGGIIDMGVEHGIIKKSGSWFTYDGDQLGQGMENSRRFLRDNPELAQELERLIKEKLGVGVVKTEEDSPKLKAVDG.

67–74 serves as a coordination point for ATP; that stretch reads GPESSGKT.

The protein belongs to the RecA family.

The protein resides in the cytoplasm. Can catalyze the hydrolysis of ATP in the presence of single-stranded DNA, the ATP-dependent uptake of single-stranded DNA by duplex DNA, and the ATP-dependent hybridization of homologous single-stranded DNAs. It interacts with LexA causing its activation and leading to its autocatalytic cleavage. This chain is Protein RecA, found in Paenarthrobacter aurescens (strain TC1).